Here is a 243-residue protein sequence, read N- to C-terminus: Terpene cyclase dpmaB (243 aa).

6 helical membrane passes run Pro11 to Trp31, Ala51 to Phe71, Leu112 to Leu132, Ala141 to Ser161, Ser169 to Leu189, and Ile207 to Val227.

It belongs to the paxB family.

The protein resides in the membrane. Its pathway is secondary metabolite biosynthesis; terpenoid biosynthesis. Its function is as follows. Terpene cyclase; part of the gene cluster that mediates the biosynthesis of the diterpenoid pyrones subglutinols A and B. The first step of the pathway is the synthesis of the alpha-pyrone moiety by the polyketide synthase dpmaA via condensation of one acetyl-CoA starter unit with 3 malonyl-CoA units and 2 methylations. The alpha-pyrone is then combined with geranylgeranyl pyrophosphate (GGPP) formed by the GGPP synthase dpmaD through the action of the prenyltransferase dpmaC to yield a linear alpha-pyrone diterpenoid. Subsequent steps in the diterpenoid pyrone biosynthetic pathway involve the decalin core formation, which is initiated by the epoxidation of the C10-C11 olefin by the FAD-dependent oxidoreductase dpmaE, and is followed by a cyclization cascade catalyzed by the terpene cyclase dpmaB. The dehydrogenase dpmaF is then involved in tetrahydrofuran (THF) ring formation at the C5 unit to complete the formation of subglutinols A and B. The polypeptide is Terpene cyclase dpmaB (Metarhizium anisopliae (Entomophthora anisopliae)).